The following is an 861-amino-acid chain: ToMV resistant protein Tm-2 netted virescent (861 aa).

Residues 63 to 83 adopt a coiled-coil conformation; the sequence is VKNLLKDIQELAGDVEDLLDD. One can recognise an NB-ARC domain in the interval 162 to 388; that stretch reads DDFNMLQAKL…LESMGHKVQD (227 aa). ATP is bound at residue 185-192; sequence GMPGLGKT. LRR repeat units lie at residues 225–248, 305–327, 388–411, 449–472, 510–536, 585–608, 609–631, 652–680, 689–710, 712–735, 736–758, 784–807, and 810–835; these read LDIA…NLRS, LHAL…IFNF, DGCA…CFLY, LAED…TYNG, VARL…KLEK, MTCL…IVKL, TRLE…VWES, ISSF…FFEP, LRKL…IFSP, LKAL…LSSY, PHIA…SFPP, LRKL…EANG, and FPQL…DVSM.

The protein belongs to the disease resistance NB-LRR family. (Microbial infection) Interacts with tobamoviruses mouvement protein at the plasma membrane; this interaction triggers defense responses leading to programmed cell death. In terms of assembly, binds to HSP90 proteins; this interaction seems required for defense responses toward tobamoviruses.

The protein localises to the cell membrane. Its function is as follows. Inhibitor of viral mouvements which confers resistance to some tobamoviruses including tomato mosaic virus (ToMV) (e.g. isolate L and W3) and tobacco mosaic virus (TMV), but not to resistance-breaking isolates (e.g. Ltbl) ToMV and tomato brown rugose fruit virus (ToBRFV). Elicits a hypersensitive reaction in response to avirulent (Avr) movement proteins from resistance inducing tobamoviruses (e.g. ToMV and TMV) strains, thus leading to programmed cell death. The polypeptide is ToMV resistant protein Tm-2 netted virescent (Solanum lycopersicum (Tomato)).